Consider the following 243-residue polypeptide: Uridylate kinase (243 aa).

ATP is bound at residue 15–18; that stretch reads KISG. G57 contacts UMP. ATP contacts are provided by G58 and R62. UMP is bound by residues D77 and 138 to 145; that span reads TGNPFFTT. Residues T165, F171, and D174 each contribute to the ATP site.

Belongs to the UMP kinase family. As to quaternary structure, homohexamer.

The protein resides in the cytoplasm. It carries out the reaction UMP + ATP = UDP + ADP. It functions in the pathway pyrimidine metabolism; CTP biosynthesis via de novo pathway; UDP from UMP (UMPK route): step 1/1. Inhibited by UTP. Catalyzes the reversible phosphorylation of UMP to UDP. The chain is Uridylate kinase from Blochmanniella floridana.